A 214-amino-acid chain; its full sequence is MRIILLGAPGAGKGTQAQFIMEKYGIPQISTGDMLRAAVKSGSELGKQAKDIMDAGKLVTDELVIALVKERIAQEDCRYGFLLDGFPRTIPQADAMKEAGINVDYVLEFDVPDELIVDRIVGRRVHAPSGRVYHVKFNPPKVEGKDDVTGEELTTRKDDQEETVRKRLVEYHQMTAPLIGYYSKEAEAGNTKYAKVDGTKPVAEVRAALEKILG.

10–15 is a binding site for ATP; it reads GAGKGT. Positions 30–59 are NMP; it reads STGDMLRAAVKSGSELGKQAKDIMDAGKLV. AMP is bound by residues threonine 31, arginine 36, 57-59, 85-88, and glutamine 92; these read KLV and GFPR. Positions 122–159 are LID; sequence GRRVHAPSGRVYHVKFNPPKVEGKDDVTGEELTTRKDD. ATP is bound by residues arginine 123 and 132 to 133; that span reads VY. Residues arginine 156 and arginine 167 each contribute to the AMP site. An N6-acetyllysine modification is found at lysine 192. Lysine 200 is an ATP binding site.

This sequence belongs to the adenylate kinase family. As to quaternary structure, monomer.

The protein resides in the cytoplasm. The enzyme catalyses AMP + ATP = 2 ADP. The protein operates within purine metabolism; AMP biosynthesis via salvage pathway; AMP from ADP: step 1/1. Catalyzes the reversible transfer of the terminal phosphate group between ATP and AMP. Plays an important role in cellular energy homeostasis and in adenine nucleotide metabolism. In Escherichia coli O45:K1 (strain S88 / ExPEC), this protein is Adenylate kinase.